The primary structure comprises 215 residues: CASP-like protein 1U3 (215 aa).

Residues 1-13 are Cytoplasmic-facing; sequence MHDEEKKEPKWVT. The chain crosses the membrane as a helical span at residues 14-34; it reads AVSIAGRIAGMGLAVAAAVLM. The Extracellular portion of the chain corresponds to 35-68; sequence STASQCTVYYAAPAASAYGGAARARTVTYSDFPP. The helical transmembrane segment at 69–89 threads the bilayer; the sequence is FVFLVGAASIAAFLEAIAIFL. Over 90-105 the chain is Cytoplasmic; it reads VVWKKGKDKTTKVLMP. The helical transmembrane segment at 106 to 126 threads the bilayer; that stretch reads LLGVAVPALLYSATGAAFAAV. Over 127 to 161 the chain is Extracellular; the sequence is SDMSYCSANGKRVSICAGSAAAGGGVSGGTNFCSQ. Residues 162–182 form a helical membrane-spanning segment; the sequence is VHIAVYLSLAAAVAVSVAEVV. The Cytoplasmic portion of the chain corresponds to 183–215; the sequence is RGLGGSASGGGSDSDSSSSSESGGCDHGCHHKH. The disordered stretch occupies residues 187–215; the sequence is GSASGGGSDSDSSSSSESGGCDHGCHHKH. Residues 195–205 show a composition bias toward low complexity; it reads DSDSSSSSESG.

This sequence belongs to the Casparian strip membrane proteins (CASP) family. In terms of assembly, homodimer and heterodimers.

Its subcellular location is the cell membrane. The sequence is that of CASP-like protein 1U3 from Sorghum bicolor (Sorghum).